The following is a 1592-amino-acid chain: Autophagy-related protein 2 (1592 aa).

Residue Ser-236 is modified to Phosphoserine. The interval 264–286 is disordered; sequence AMEEQSNEDPSEPQVTQEEQEND.

It belongs to the ATG2 family.

It localises to the preautophagosomal structure membrane. The protein localises to the endoplasmic reticulum membrane. It catalyses the reaction a 1,2-diacyl-sn-glycero-3-phosphocholine(in) = a 1,2-diacyl-sn-glycero-3-phosphocholine(out). The catalysed reaction is a 1,2-diacyl-sn-glycero-3-phospho-L-serine(in) = a 1,2-diacyl-sn-glycero-3-phospho-L-serine(out). The enzyme catalyses a 1,2-diacyl-sn-glycero-3-phosphoethanolamine(in) = a 1,2-diacyl-sn-glycero-3-phosphoethanolamine(out). Functionally, lipid transfer protein required for autophagosome completion and peroxisome degradation. Tethers the edge of the isolation membrane (IM) to the endoplasmic reticulum (ER) and mediates direct lipid transfer from ER to IM for IM expansion. ATG2 binds to the ER exit site (ERES), which is the membrane source for autophagosome formation, using basic residues in its N-terminal region (NR) and to the expanding edge of the IM through its C-terminal region. The latter binding is assisted by an ATG18-PtdIns3P interaction. ATG2 then extracts phospholipids from the membrane source using its NR and transfers them to ATG9 to the IM through its predicted beta-sheet-rich structure for membrane expansion. This is Autophagy-related protein 2 (ATG2) from Saccharomyces cerevisiae (strain YJM789) (Baker's yeast).